The primary structure comprises 340 residues: Protein RecA (340 aa).

G74 to T81 is a binding site for ATP.

This sequence belongs to the RecA family.

It is found in the cytoplasm. Can catalyze the hydrolysis of ATP in the presence of single-stranded DNA, the ATP-dependent uptake of single-stranded DNA by duplex DNA, and the ATP-dependent hybridization of homologous single-stranded DNAs. It interacts with LexA causing its activation and leading to its autocatalytic cleavage. This Porphyromonas gingivalis (strain ATCC 33277 / DSM 20709 / CIP 103683 / JCM 12257 / NCTC 11834 / 2561) protein is Protein RecA.